Consider the following 419-residue polypeptide: Glutamate dehydrogenase (419 aa).

Residue Lys-105 is part of the active site. An NAD(+)-binding site is contributed by 219-225; sequence GYGNAGY.

The protein belongs to the Glu/Leu/Phe/Val dehydrogenases family. As to quaternary structure, homohexamer.

The catalysed reaction is L-glutamate + NAD(+) + H2O = 2-oxoglutarate + NH4(+) + NADH + H(+). The enzyme catalyses L-glutamate + NADP(+) + H2O = 2-oxoglutarate + NH4(+) + NADPH + H(+). The polypeptide is Glutamate dehydrogenase (gdhA) (Thermococcus profundus).